A 273-amino-acid polypeptide reads, in one-letter code: Aspartate/glutamate leucyltransferase (273 aa).

It belongs to the R-transferase family. Bpt subfamily.

The protein localises to the cytoplasm. The enzyme catalyses N-terminal L-glutamyl-[protein] + L-leucyl-tRNA(Leu) = N-terminal L-leucyl-L-glutamyl-[protein] + tRNA(Leu) + H(+). The catalysed reaction is N-terminal L-aspartyl-[protein] + L-leucyl-tRNA(Leu) = N-terminal L-leucyl-L-aspartyl-[protein] + tRNA(Leu) + H(+). In terms of biological role, functions in the N-end rule pathway of protein degradation where it conjugates Leu from its aminoacyl-tRNA to the N-termini of proteins containing an N-terminal aspartate or glutamate. The chain is Aspartate/glutamate leucyltransferase from Ruegeria pomeroyi (strain ATCC 700808 / DSM 15171 / DSS-3) (Silicibacter pomeroyi).